The following is an 86-amino-acid chain: Heat shock factor-binding protein (86 aa).

Residues 34-63 (MSDSIITKIDDMGGRINELEQSINDLRAEM) are a coiled coil. The tract at residues 42 to 52 (IDDMGGRINEL) is required for interactions with heat shock factors (HSFs). Positions 59-86 (LRAEMGVEGTPPPASKSGDEPKTPASSS) are disordered.

It belongs to the HSBP1 family. In terms of assembly, homohexamer. Interacts with HSFA1A, HSFA1B and HSFA2. In terms of tissue distribution, mostly expressed in siliques and flowers, and, to a lower extent, in roots, stems and leaves.

It localises to the nucleus. Its subcellular location is the cytoplasm. The protein localises to the cytosol. Negative regulator of the heat shock (HS) response. Affects negatively HSFA1B DNA-binding capacity in vitro. Involved in acquired thermotolerance but not basal thermotolerance. Crucial for seed development, after fertilization and during embryogenesis. The chain is Heat shock factor-binding protein from Arabidopsis thaliana (Mouse-ear cress).